Consider the following 141-residue polypeptide: Nucleoside triphosphatase NudI (141 aa).

The 141-residue stretch at 1-141 (MRQRTIVCPL…RHTLRLKGLL (141 aa)) folds into the Nudix hydrolase domain. The Nudix box signature appears at 38–59 (GGVEPGERIEEALRREIREELG).

The protein belongs to the Nudix hydrolase family. NudI subfamily. As to quaternary structure, monomer. Requires Mg(2+) as cofactor.

The enzyme catalyses a ribonucleoside 5'-triphosphate + H2O = a ribonucleoside 5'-phosphate + diphosphate + H(+). It carries out the reaction a 2'-deoxyribonucleoside 5'-triphosphate + H2O = a 2'-deoxyribonucleoside 5'-phosphate + diphosphate + H(+). It catalyses the reaction dUTP + H2O = dUMP + diphosphate + H(+). The catalysed reaction is dTTP + H2O = dTMP + diphosphate + H(+). The enzyme catalyses dCTP + H2O = dCMP + diphosphate + H(+). In terms of biological role, catalyzes the hydrolysis of nucleoside triphosphates, with a preference for pyrimidine deoxynucleoside triphosphates (dUTP, dTTP and dCTP). The chain is Nucleoside triphosphatase NudI from Salmonella arizonae (strain ATCC BAA-731 / CDC346-86 / RSK2980).